Consider the following 520-residue polypeptide: 2-isopropylmalate synthase (520 aa).

The 263-residue stretch at 12–274 folds into the Pyruvate carboxyltransferase domain; it reads IRIFDTTLRD…DSAINTPRIV (263 aa). 4 residues coordinate Mn(2+): Asp21, His209, His211, and Asn245. The segment at 396 to 520 is regulatory domain; the sequence is RLASMTISDV…VIAGKTAAVA (125 aa).

It belongs to the alpha-IPM synthase/homocitrate synthase family. LeuA type 1 subfamily. In terms of assembly, homodimer. Requires Mn(2+) as cofactor.

Its subcellular location is the cytoplasm. The catalysed reaction is 3-methyl-2-oxobutanoate + acetyl-CoA + H2O = (2S)-2-isopropylmalate + CoA + H(+). Its pathway is amino-acid biosynthesis; L-leucine biosynthesis; L-leucine from 3-methyl-2-oxobutanoate: step 1/4. In terms of biological role, catalyzes the condensation of the acetyl group of acetyl-CoA with 3-methyl-2-oxobutanoate (2-ketoisovalerate) to form 3-carboxy-3-hydroxy-4-methylpentanoate (2-isopropylmalate). The protein is 2-isopropylmalate synthase of Xanthomonas oryzae pv. oryzae (strain KACC10331 / KXO85).